A 121-amino-acid chain; its full sequence is UPF0295 protein ABC1323 (121 aa).

2 consecutive transmembrane segments (helical) span residues 14–34 (TFAL…IFFK) and 41–61 (VIAM…YFFI).

Belongs to the UPF0295 family.

The protein resides in the cell membrane. The sequence is that of UPF0295 protein ABC1323 from Shouchella clausii (strain KSM-K16) (Alkalihalobacillus clausii).